We begin with the raw amino-acid sequence, 102 residues long: ATP-dependent Clp protease adapter protein ClpS (102 aa).

This sequence belongs to the ClpS family. In terms of assembly, binds to the N-terminal domain of the chaperone ClpA.

Involved in the modulation of the specificity of the ClpAP-mediated ATP-dependent protein degradation. The sequence is that of ATP-dependent Clp protease adapter protein ClpS from Wolinella succinogenes (strain ATCC 29543 / DSM 1740 / CCUG 13145 / JCM 31913 / LMG 7466 / NCTC 11488 / FDC 602W) (Vibrio succinogenes).